Consider the following 153-residue polypeptide: Interleukin-4 (153 aa).

Positions 1–24 (MGLTSQLLPPLFFLLACAGNFVHG) are cleaved as a signal peptide. Intrachain disulfides connect Cys-27/Cys-151, Cys-48/Cys-89, and Cys-70/Cys-123. Residue Asn-62 is glycosylated (N-linked (GlcNAc...) asparagine).

The protein belongs to the IL-4/IL-13 family. In terms of assembly, interacts with IL4R. Interacts with IL13RA1.

Its subcellular location is the secreted. Cytokine secreted primarily by mast cells, T-cells, eosinophils, and basophils that plays a role in regulating antibody production, hematopoiesis and inflammation, and the development of effector T-cell responses. Induces the expression of class II MHC molecules on resting B-cells. Enhances both secretion and cell surface expression of IgE and IgG1. Also regulates the expression of the low affinity Fc receptor for IgE (CD23) on both lymphocytes and monocytes. Positively regulates IL31RA expression in macrophages. Stimulates autophagy in dendritic cells by interfering with mTORC1 signaling and through the induction of RUFY4. In addition, plays a critical role in higher functions of the normal brain, such as memory and learning. Upon binding to IL4, IL4R receptor dimerizes either with the common IL2R gamma chain/IL2RG to produce the type 1 signaling complex, located mainly on hematopoietic cells, or with the IL13RA1 to produce the type 2 complex, which is also expressed on nonhematopoietic cells. Engagement of both types of receptors initiates JAK3 and to a lower extend JAK1 phosphorylation leading to activation of the signal transducer and activator of transcription 6/STAT6. This is Interleukin-4 (IL4) from Homo sapiens (Human).